Reading from the N-terminus, the 392-residue chain is Probable tRNA sulfurtransferase (392 aa).

The THUMP domain maps to 59–166 (DEIIERVKKV…ECSFVFTKKV (108 aa)). ATP-binding positions include 183-184 (LL), 208-209 (HF), R265, G287, and Q296.

The protein belongs to the ThiI family.

It localises to the cytoplasm. The catalysed reaction is [ThiI sulfur-carrier protein]-S-sulfanyl-L-cysteine + a uridine in tRNA + 2 reduced [2Fe-2S]-[ferredoxin] + ATP + H(+) = [ThiI sulfur-carrier protein]-L-cysteine + a 4-thiouridine in tRNA + 2 oxidized [2Fe-2S]-[ferredoxin] + AMP + diphosphate. It carries out the reaction [ThiS sulfur-carrier protein]-C-terminal Gly-Gly-AMP + S-sulfanyl-L-cysteinyl-[cysteine desulfurase] + AH2 = [ThiS sulfur-carrier protein]-C-terminal-Gly-aminoethanethioate + L-cysteinyl-[cysteine desulfurase] + A + AMP + 2 H(+). The protein operates within cofactor biosynthesis; thiamine diphosphate biosynthesis. Functionally, catalyzes the ATP-dependent transfer of a sulfur to tRNA to produce 4-thiouridine in position 8 of tRNAs, which functions as a near-UV photosensor. Also catalyzes the transfer of sulfur to the sulfur carrier protein ThiS, forming ThiS-thiocarboxylate. This is a step in the synthesis of thiazole, in the thiamine biosynthesis pathway. The sulfur is donated as persulfide by IscS. The polypeptide is Probable tRNA sulfurtransferase (Alkaliphilus metalliredigens (strain QYMF)).